The chain runs to 193 residues: uncharacterized protein (193 aa).

The first 14 residues, 1–14 (MSTSLLFSLSPSSS), serve as a signal peptide directing secretion.

This is an uncharacterized protein from Saccharomyces cerevisiae (strain ATCC 204508 / S288c) (Baker's yeast).